Here is a 77-residue protein sequence, read N- to C-terminus: U10-lycotoxin-Ls1a (77 aa).

A signal peptide spans 1-20 (MKLIIFTGLVLFAIVSLIEA). Residues 21–26 (EEESGR) constitute a propeptide that is removed on maturation.

It belongs to the neurotoxin 19 (CSTX) family. 09 (U10-Lctx) subfamily. In terms of processing, contains 4 disulfide bonds. Expressed by the venom gland.

It is found in the secreted. This chain is U10-lycotoxin-Ls1a, found in Lycosa singoriensis (Wolf spider).